We begin with the raw amino-acid sequence, 382 residues long: Cysteine desulfurase IscS 1 (382 aa).

Residue Asn149 coordinates pyridoxal 5'-phosphate. Cys321 functions as the Cysteine persulfide intermediate in the catalytic mechanism. Cys321 is a [2Fe-2S] cluster binding site.

The protein belongs to the class-V pyridoxal-phosphate-dependent aminotransferase family. NifS/IscS subfamily. Homodimer. Forms a heterotetramer with IscU, interacts with other sulfur acceptors. Pyridoxal 5'-phosphate is required as a cofactor.

The protein resides in the cytoplasm. The enzyme catalyses (sulfur carrier)-H + L-cysteine = (sulfur carrier)-SH + L-alanine. It functions in the pathway cofactor biosynthesis; iron-sulfur cluster biosynthesis. Its function is as follows. Master enzyme that delivers sulfur to a number of partners involved in Fe-S cluster assembly, tRNA modification or cofactor biosynthesis. Catalyzes the removal of elemental sulfur atoms from cysteine to produce alanine. Functions as a sulfur delivery protein for Fe-S cluster synthesis onto IscU, an Fe-S scaffold assembly protein, as well as other S acceptor proteins. The chain is Cysteine desulfurase IscS 1 from Archaeoglobus fulgidus (strain ATCC 49558 / DSM 4304 / JCM 9628 / NBRC 100126 / VC-16).